A 126-amino-acid polypeptide reads, in one-letter code: Glycine cleavage system H protein (126 aa).

Residues 21–103 (TVTIGISEHA…YEGGWIVKVK (83 aa)) enclose the Lipoyl-binding domain. K62 carries the N6-lipoyllysine modification.

It belongs to the GcvH family. As to quaternary structure, the glycine cleavage system is composed of four proteins: P, T, L and H. (R)-lipoate is required as a cofactor.

In terms of biological role, the glycine cleavage system catalyzes the degradation of glycine. The H protein shuttles the methylamine group of glycine from the P protein to the T protein. This chain is Glycine cleavage system H protein, found in Vibrio atlanticus (strain LGP32) (Vibrio splendidus (strain Mel32)).